We begin with the raw amino-acid sequence, 798 residues long: Tripartite terminase subunit 1 (798 aa).

The C3H1-type zinc finger occupies 191-219; it reads CFQCYEELMAVPNQGRSINRRMQGLLCDH. Over residues 416-429 the composition is skewed to low complexity; sequence AAGAARSRAEAASG. A disordered region spans residues 416-458; it reads AAGAARSRAEAASGAGAGGEEGAGAAAGRGNTGGDEGAGTTTA. The segment covering 430–452 has biased composition (gly residues); the sequence is AGAGGEEGAGAAAGRGNTGGDEG. 674–681 lines the ATP pocket; that stretch reads YNETFGKQ.

It belongs to the herpesviridae TRM1 protein family. As to quaternary structure, associates with TRM2 and TRM3 to form the tripartite terminase complex. Interacts with portal protein.

It is found in the host nucleus. Component of the molecular motor that translocates viral genomic DNA in empty capsid during DNA packaging. Forms a tripartite terminase complex together with TRM2 and TRM3 in the host cytoplasm. Once the complex reaches the host nucleus, it interacts with the capsid portal vertex. This portal forms a ring in which genomic DNA is translocated into the capsid. TRM1 carries an endonuclease activity that plays an important role for the cleavage of concatemeric viral DNA into unit length genomes. In Murid herpesvirus 1 (strain Smith) (MuHV-1), this protein is Tripartite terminase subunit 1.